The following is a 551-amino-acid chain: uncharacterized protein (551 aa).

4 disordered regions span residues 66-111 (GNNK…STNL), 130-165 (PEAT…EKSN), 180-229 (AFNP…LSNL), and 277-303 (AFTS…VPLS). A Phosphoserine modification is found at S74. Polar residues-rich tracts occupy residues 92–111 (GFSN…STNL) and 143–156 (VVNT…GTQE). The span at 182-193 (NPSSVLPSNSSS) shows a compositional bias: low complexity. A compositionally biased stretch (polar residues) spans 204–226 (KETYQPNTFRRSPLKNDTGSVEL). Over residues 290-299 (TRPSSTRFPS) the composition is skewed to low complexity.

This is an uncharacterized protein from Schizosaccharomyces pombe (strain 972 / ATCC 24843) (Fission yeast).